A 259-amino-acid polypeptide reads, in one-letter code: Pimeloyl-[acyl-carrier protein] methyl ester esterase (259 aa).

Residues Trp18, 78–79, and 139–143 each bind substrate; these read SL and FLALD. The Nucleophile role is filled by Ser78. Active-site residues include Asp203 and His231. His231 contacts substrate.

This sequence belongs to the AB hydrolase superfamily. Carboxylesterase BioH family. In terms of assembly, monomer.

It localises to the cytoplasm. The enzyme catalyses 6-carboxyhexanoyl-[ACP] methyl ester + H2O = 6-carboxyhexanoyl-[ACP] + methanol + H(+). Its pathway is cofactor biosynthesis; biotin biosynthesis. In terms of biological role, the physiological role of BioH is to remove the methyl group introduced by BioC when the pimeloyl moiety is complete. It allows to synthesize pimeloyl-ACP via the fatty acid synthetic pathway through the hydrolysis of the ester bonds of pimeloyl-ACP esters. The polypeptide is Pimeloyl-[acyl-carrier protein] methyl ester esterase (Stenotrophomonas maltophilia (strain R551-3)).